The sequence spans 328 residues: GMP reductase (328 aa).

Cys-176 serves as the catalytic Thioimidate intermediate. 205–228 (IIADGGIRTHGDIAKSVRFGATMV) serves as a coordination point for NADP(+).

The protein belongs to the IMPDH/GMPR family. GuaC type 2 subfamily.

It catalyses the reaction IMP + NH4(+) + NADP(+) = GMP + NADPH + 2 H(+). In terms of biological role, catalyzes the irreversible NADPH-dependent deamination of GMP to IMP. It functions in the conversion of nucleobase, nucleoside and nucleotide derivatives of G to A nucleotides, and in maintaining the intracellular balance of A and G nucleotides. The sequence is that of GMP reductase from Shouchella clausii (strain KSM-K16) (Alkalihalobacillus clausii).